The chain runs to 609 residues: Hemagglutinin glycoprotein (609 aa).

At 1-34 the chain is on the intravirion side; it reads MSSPRDRVNAFYKDNLQFKNTRVVLNKEQLLIER. The helical; Signal-anchor for type II membrane protein transmembrane segment at 35–58 threads the bilayer; that stretch reads PYMLLAVLFVMFLSLVGLLAIAGI. The Virion surface portion of the chain corresponds to 59-609; that stretch reads RLHRAAVNTA…VGIEITCNSR (551 aa). 4 N-linked (GlcNAc...) asparagine; by host glycosylation sites follow: Asn168, Asn200, Asn215, and Asn395.

This sequence belongs to the paramyxoviruses hemagglutinin-neuraminidase family. Non-sialidase subfamily.

It localises to the virion membrane. Its subcellular location is the host membrane. Functionally, attaches the virus to cell receptors and thereby initiating infection. Binding of H protein to the receptor induces a conformational change that allows the F protein to trigger virion/cell membranes fusion. Down-regulates human MCP/CD46 cell surface expression. This Rinderpest virus (strain L) (RDV) protein is Hemagglutinin glycoprotein (H).